Here is a 164-residue protein sequence, read N- to C-terminus: Peptidyl-prolyl cis-trans isomerase (164 aa).

Residues 7–163 form the PPIase cyclophilin-type domain; it reads FFDLQANGEN…KKITIADCGQ (157 aa).

This sequence belongs to the cyclophilin-type PPIase family. PPIase A subfamily.

It localises to the cytoplasm. The catalysed reaction is [protein]-peptidylproline (omega=180) = [protein]-peptidylproline (omega=0). Its activity is regulated as follows. Binds cyclosporin A (CsA). CsA mediates some of its effects via an inhibitory action on PPIase. PPIases accelerate the folding of proteins. It catalyzes the cis-trans isomerization of proline imidic peptide bonds in oligopeptides. The chain is Peptidyl-prolyl cis-trans isomerase from Hemicentrotus pulcherrimus (Sea urchin).